We begin with the raw amino-acid sequence, 308 residues long: MTTTLSNALLSDILQQIRPLIGQGKVADYIPALAQVPANQLAMAVYTVDGELYQAGMADKRFSIQSISKVLSLTLALTRYDESEIWQRVGKEPSGLPFNSLIQLEMEKGLPRNPFINAGAIVITDMLQSRLSAPKQRMLEVIRALTNTADICYNTVVAKSEMEHLSRNAAIAYLMKSFDNFDNDVITVLETYFHYCSIEMSCVELVRCFSYLANQGICVGSKNQIITPRQARQINALMLTCGMYDGAGEFAFRIGIPGKSGVGGGIIAVVPDAFTVAVWSPELDKSGNSLAGCAALELLANKVGRSIF.

7 residues coordinate substrate: Ser66, Asn117, Glu161, Asn168, Tyr192, Tyr244, and Val262.

Belongs to the glutaminase family. In terms of assembly, homotetramer.

It catalyses the reaction L-glutamine + H2O = L-glutamate + NH4(+). The polypeptide is Glutaminase (Proteus mirabilis (strain HI4320)).